The chain runs to 659 residues: Tetratricopeptide repeat protein 30 homolog (659 aa).

7 TPR repeats span residues 3-36, 43-76, 143-176, 178-210, 391-424, 450-483, and 533-566; these read SQNM…LNGI, RAGL…VPDV, ATVK…GGFN, HIAY…GIRN, CRSA…RAWI, TWRL…NYDD, and CIVN…GSGA.

Belongs to the TTC30/dfy-1/fleer family.

The protein resides in the cell projection. The protein localises to the cilium. Required for polyglutamylation of axonemal tubulin in sensory cilia. Plays a role in anterograde intraflagellar transport (IFT), the process by which cilia precursors are transported from the base of the cilium to the site of their incorporation at the tip. This is Tetratricopeptide repeat protein 30 homolog from Aedes aegypti (Yellowfever mosquito).